Reading from the N-terminus, the 41-residue chain is Virescein (41 aa).

At His41 the chain carries Histidine amide.

As to quaternary structure, monomer. Hemolymph.

It localises to the secreted. Functionally, has antibacterial activity against Gram-positive and Gram-negative bacteria. This is Virescein from Heliothis virescens (Tobacco budworm moth).